We begin with the raw amino-acid sequence, 619 residues long: ATP-dependent RNA helicase dbp9 (619 aa).

Positions 1–30 (MKRKLDANDVPSTEVAEEKETKDADNTDFE) are disordered. Positions 16–25 (AEEKETKDAD) are enriched in basic and acidic residues. The Q motif signature appears at 27–55 (TDFESLNLDPRLRQALIREQFTKPTPVQS). The Helicase ATP-binding domain maps to 58–236 (IPLALEGKDI…GLFCRSPVIL (179 aa)). 71 to 78 (AKTGSGKT) lines the ATP pocket. The short motif at 184–187 (DEAD) is the DEAD box element. In terms of domain architecture, Helicase C-terminal spans 247 to 484 (GISQFVVRCA…EVKPYHFEMK (238 aa)). 2 disordered regions span residues 339 to 390 (SRTS…GKAK) and 582 to 619 (GDNR…RGRK). A compositionally biased stretch (basic and acidic residues) spans 345 to 362 (KSKEATDGDDEAKDKMGS). Over residues 587-604 (RKAREKNRGKGKGRKPSG) the composition is skewed to basic residues.

It belongs to the DEAD box helicase family. DDX56/DBP9 subfamily.

Its subcellular location is the nucleus. It is found in the nucleolus. The enzyme catalyses ATP + H2O = ADP + phosphate + H(+). Functionally, ATP-binding RNA helicase involved in the biogenesis of 60S ribosomal subunits and is required for the normal formation of 25S and 5.8S rRNAs. The protein is ATP-dependent RNA helicase dbp9 (dbp9) of Neosartorya fischeri (strain ATCC 1020 / DSM 3700 / CBS 544.65 / FGSC A1164 / JCM 1740 / NRRL 181 / WB 181) (Aspergillus fischerianus).